The chain runs to 356 residues: NADH-quinone oxidoreductase subunit H (356 aa).

9 consecutive transmembrane segments (helical) span residues 22–42 (GVVS…TAYL), 59–79 (PSLA…KLVF), 93–113 (FIIA…VIPI), 124–144 (IGGI…IIIA), 171–191 (MALS…IQIV), 198–218 (PIWL…SILA), 240–260 (VEYS…NMIL), 285–305 (IPGY…FLWI), and 321–341 (GLKV…TILV).

Belongs to the complex I subunit 1 family. NDH-1 is composed of 14 different subunits. Subunits NuoA, H, J, K, L, M, N constitute the membrane sector of the complex.

The protein resides in the cell inner membrane. It catalyses the reaction a quinone + NADH + 5 H(+)(in) = a quinol + NAD(+) + 4 H(+)(out). Functionally, NDH-1 shuttles electrons from NADH, via FMN and iron-sulfur (Fe-S) centers, to quinones in the respiratory chain. The immediate electron acceptor for the enzyme in this species is believed to be ubiquinone. Couples the redox reaction to proton translocation (for every two electrons transferred, four hydrogen ions are translocated across the cytoplasmic membrane), and thus conserves the redox energy in a proton gradient. This subunit may bind ubiquinone. The polypeptide is NADH-quinone oxidoreductase subunit H (Orientia tsutsugamushi (strain Boryong) (Rickettsia tsutsugamushi)).